Reading from the N-terminus, the 203-residue chain is Endothelin-1 (203 aa).

Positions 1-25 (MDYFPMIIALLFVAFQGAPETAVLG) are cleaved as a signal peptide. The propeptide occupies 26–50 (AELSPEAESQGETPSPHASWRPRRS). The disordered stretch occupies residues 27 to 48 (ELSPEAESQGETPSPHASWRPR). 2 disulfide bridges follow: Cys-53–Cys-67 and Cys-55–Cys-63. The propeptide occupies 83 to 203 (YGLGSPSRSR…DKKVTHNRTH (121 aa)). The interval 110–124 (CQCASQKDKKCWSFC) is endothelin-like. N-linked (GlcNAc...) asparagine glycosylation occurs at Asn-200.

The protein belongs to the endothelin/sarafotoxin family.

It localises to the secreted. In terms of biological role, endothelins are endothelium-derived vasoconstrictor peptides. Probable ligand for G-protein coupled receptors EDNRA and EDNRB which activates PTK2B, BCAR1, BCAR3 and, GTPases RAP1 and RHOA cascade in glomerular mesangial cells. Also binds the DEAR/FBXW7-AS1 receptor. Promotes mesenteric arterial wall remodeling via activation of ROCK signaling and subsequent colocalization of NFATC3 with F-actin filaments. NFATC3 then translocates to the nucleus where it subsequently promotes the transcription of the smooth muscle hypertrophy and differentiation marker ACTA2. This chain is Endothelin-1 (EDN1), found in Sus scrofa (Pig).